We begin with the raw amino-acid sequence, 639 residues long: Phosphomethylpyrimidine synthase (639 aa).

Residues 49 to 71 (DTPTDFGGEQNRPVRVYDTSGPY) are disordered. Residues Asn-231, Met-260, Tyr-289, His-325, 345 to 347 (SRG), 386 to 389 (DGLR), and Glu-425 each bind substrate. Zn(2+) is bound at residue His-429. Tyr-452 serves as a coordination point for substrate. Position 493 (His-493) interacts with Zn(2+). Cys-573, Cys-576, and Cys-581 together coordinate [4Fe-4S] cluster.

It belongs to the ThiC family. Homodimer. The cofactor is [4Fe-4S] cluster.

It carries out the reaction 5-amino-1-(5-phospho-beta-D-ribosyl)imidazole + S-adenosyl-L-methionine = 4-amino-2-methyl-5-(phosphooxymethyl)pyrimidine + CO + 5'-deoxyadenosine + formate + L-methionine + 3 H(+). It participates in cofactor biosynthesis; thiamine diphosphate biosynthesis. In terms of biological role, catalyzes the synthesis of the hydroxymethylpyrimidine phosphate (HMP-P) moiety of thiamine from aminoimidazole ribotide (AIR) in a radical S-adenosyl-L-methionine (SAM)-dependent reaction. The polypeptide is Phosphomethylpyrimidine synthase (Teredinibacter turnerae (strain ATCC 39867 / T7901)).